The chain runs to 116 residues: Insulin (116 aa).

Positions 1–24 (MAALWLQSFSLLVLLVVSWPGSQA) are cleaved as a signal peptide. Intrachain disulfides connect cysteine 32/cysteine 102, cysteine 44/cysteine 115, and cysteine 101/cysteine 106. The propeptide at 56-93 (DVDQLLGFLPPKSGGAAAAGADNEVAEFAFKDQMEMMV) is c peptide.

It belongs to the insulin family. In terms of assembly, heterodimer of a B chain and an A chain linked by two disulfide bonds.

It is found in the secreted. Insulin decreases blood glucose concentration. It increases cell permeability to monosaccharides, amino acids and fatty acids. It accelerates glycolysis, the pentose phosphate cycle, and glycogen synthesis in liver. In Lophius americanus (American angler), this protein is Insulin (ins).